Here is a 250-residue protein sequence, read N- to C-terminus: HTH-type transcriptional regulator SarS (250 aa).

2 DNA-binding regions (H-T-H motif) span residues 53-76 and 177-200; these read FKKIVSDLCYKQSDLVQHIKVLVK and LKDLIETIHHKYPQTVRALNNLKK.

This sequence belongs to the SarA family.

It is found in the cytoplasm. Functionally, transcriptional regulator that controls expression of some virulence factors in a cell density-dependent manner. This is HTH-type transcriptional regulator SarS (sarS) from Staphylococcus aureus (strain Mu3 / ATCC 700698).